Here is a 91-residue protein sequence, read N- to C-terminus: Small ribosomal subunit protein uS19 (91 aa).

It belongs to the universal ribosomal protein uS19 family.

Protein S19 forms a complex with S13 that binds strongly to the 16S ribosomal RNA. This Cupriavidus taiwanensis (strain DSM 17343 / BCRC 17206 / CCUG 44338 / CIP 107171 / LMG 19424 / R1) (Ralstonia taiwanensis (strain LMG 19424)) protein is Small ribosomal subunit protein uS19.